The sequence spans 167 residues: Respiratory supercomplex factor 1-A, mitochondrial (167 aa).

The HIG1 domain maps to 1–86 (MCSDFEEETS…TERKQRREFE (86 aa)). 2 helical membrane-spanning segments follow: residues 21-38 (EPLIPLGCAATCYALYRA) and 53-75 (MFRARIYAQFFTLLAVVAGGMYY). Residues 75-107 (YKTERKQRREFEKKVEERKAQEKRDAWLRELEA) are a coiled coil.

The protein belongs to the RCF1 family. Associates with the respiratory chain complex III/complex IV supercomplex.

The protein localises to the mitochondrion membrane. Its function is as follows. Cytochrome c oxidase subunit which plays a role in assembly of respiratory supercomplexes. This is Respiratory supercomplex factor 1-A, mitochondrial (rcf1-A) from Talaromyces marneffei (strain ATCC 18224 / CBS 334.59 / QM 7333) (Penicillium marneffei).